Consider the following 129-residue polypeptide: uncharacterized protein (129 aa).

This sequence belongs to the asfivirus C129R family.

Its subcellular location is the virion. Plays a role in the inhibition of type I interferon signaling pathway. Mechanistically, specifically interacts with 2',3'-cGAMP and cleaves it via its phosphodiesterase activity. In turn, prevents 2',3'-cGAMP interaction with host ER-resident STING1 leading to inhibition of downstream signaling pathway and type I interferon production. This is an uncharacterized protein from Ornithodoros (relapsing fever ticks).